A 124-amino-acid polypeptide reads, in one-letter code: Small ribosomal subunit protein bS6 (124 aa).

Residues 96 to 124 (ETAPSPMMKEVQREEARKAAQTTTEGQAA) form a disordered region. The span at 115–124 (AQTTTEGQAA) shows a compositional bias: polar residues.

Belongs to the bacterial ribosomal protein bS6 family.

In terms of biological role, binds together with bS18 to 16S ribosomal RNA. The chain is Small ribosomal subunit protein bS6 from Cupriavidus necator (strain ATCC 17699 / DSM 428 / KCTC 22496 / NCIMB 10442 / H16 / Stanier 337) (Ralstonia eutropha).